The sequence spans 402 residues: MGVVELGTNSEVGALRVVILHRPGGELLRLNPRNVDQLLFDGLPWVARAQEEHDQFAELLRSRGVEVLLLSDLLTEALTHSGAARMQGVAAAVDARRLGVPLAQELSAYLRGLEPARLAQVLMAGMTFNELPADTRTDVSLVLRMHHGGDFVIDPLPNLVFTRDSSIWIGPRVVIPTLALRARVREASLTDLIYAHHPRFTGVRRAYESRTAPVEGGDVLLLAPGVVAVGVGERTTPAGAEALARSLFDDDLAHTVLAVPIAQRRAQMHLDTVCTMVDTDTVVMYANVVDALSAFTIQRTPSGVEISEAPFLEAAATAMGIDKLRVIDTGLDPVIAEREQWDDGNNTLALSPGVVVAYERNAQTNMRLQEAGIEVLTIAGSELGTGRGGPRCMSCPVARDPL.

Catalysis depends on C392, which acts as the Amidino-cysteine intermediate.

The protein belongs to the arginine deiminase family.

The protein resides in the cytoplasm. The catalysed reaction is L-arginine + H2O = L-citrulline + NH4(+). It functions in the pathway amino-acid degradation; L-arginine degradation via ADI pathway; carbamoyl phosphate from L-arginine: step 1/2. The chain is Arginine deiminase from Mycobacterium avium (strain 104).